The primary structure comprises 301 residues: MPELPEVETVKRGLAPTMEGALLVRAELRRPDLRFPFPENFANAVAGRRIIALSRRAKYLMIELEGGDVIIAHLGMSGSFRIEKGPIEAGADPATPGAFHHPRGKDEKHDHVVFHLDGGSGPARVIYNDPRRFGFMDLARRSALADHVFLRGLGEEPTGNALDAAYLATRFAGKIQPLKAALLDQRTIAGLGNIYVCEALWRSGLSPKRSAGTLVDKRGRPKQALIALTERIRAVIADAIAAGGSSLKDHIQADGSLGYFQHSFSVYDREGEACRTPGCHGTVARIVQAGRSTFYCPHCQK.

The active-site Schiff-base intermediate with DNA is Pro-2. Glu-3 acts as the Proton donor in catalysis. Lys-58 (proton donor; for beta-elimination activity) is an active-site residue. The DNA site is built by His-109, Arg-131, and Lys-174. An FPG-type zinc finger spans residues 265-301 (SVYDREGEACRTPGCHGTVARIVQAGRSTFYCPHCQK). Arg-291 (proton donor; for delta-elimination activity) is an active-site residue.

It belongs to the FPG family. Monomer. It depends on Zn(2+) as a cofactor.

It catalyses the reaction Hydrolysis of DNA containing ring-opened 7-methylguanine residues, releasing 2,6-diamino-4-hydroxy-5-(N-methyl)formamidopyrimidine.. The enzyme catalyses 2'-deoxyribonucleotide-(2'-deoxyribose 5'-phosphate)-2'-deoxyribonucleotide-DNA = a 3'-end 2'-deoxyribonucleotide-(2,3-dehydro-2,3-deoxyribose 5'-phosphate)-DNA + a 5'-end 5'-phospho-2'-deoxyribonucleoside-DNA + H(+). Functionally, involved in base excision repair of DNA damaged by oxidation or by mutagenic agents. Acts as a DNA glycosylase that recognizes and removes damaged bases. Has a preference for oxidized purines, such as 7,8-dihydro-8-oxoguanine (8-oxoG). Has AP (apurinic/apyrimidinic) lyase activity and introduces nicks in the DNA strand. Cleaves the DNA backbone by beta-delta elimination to generate a single-strand break at the site of the removed base with both 3'- and 5'-phosphates. This Rhizobium meliloti (strain 1021) (Ensifer meliloti) protein is Formamidopyrimidine-DNA glycosylase (mutM).